The sequence spans 398 residues: MANLRKTHPLLKIANDALVDLPTPTSISAWWNFGSLLGLCLVAQIITGLFLAMHYTADITTAFSSVAHICRDVNYGWLIRNLHANGASFFFICVYLHIGRGLYYGSYLYKETWNIGVILLLLVMMTAFVGYVLPWGQMSFWGATVITNLLSAVPYVGNMLVEWIWGGFSVDNATLTRFFAFHFLFPFLIAAFTIIHLLFLHETGSTNPVGLNSDADKIPFHPYFSYKDLLGFAILLIALISLSLFAPNLLGDPDNFTPANPLVTPPHIKPEWYFLFAYAILRSIPNKLGGVLALLASILILMLVPILHTSKQRSLTFRPFTQLLFWLLVADVIILTWIGGLPVEHPYVVIGQIASFLYFFLFLFLIPLSGWLENKALKWSCIDSSASERRSCKPDVGG.

The next 4 helical transmembrane spans lie at 33–53 (FGSL…FLAM), 77–98 (WLIR…YLHI), 113–133 (WNIG…GYVL), and 178–198 (FFAF…IHLL). Positions 83 and 97 each coordinate heme b. Residues H182 and H196 each contribute to the heme b site. H201 lines the a ubiquinone pocket. 4 helical membrane passes run 226 to 246 (YKDL…SLFA), 288 to 308 (LGGV…PILH), 320 to 340 (FTQL…WIGG), and 347 to 367 (YVVI…FLIP).

The protein belongs to the cytochrome b family. The cytochrome bc1 complex contains 3 respiratory subunits (MT-CYB, CYC1 and UQCRFS1), 2 core proteins (UQCRC1 and UQCRC2) and probably 6 low-molecular weight proteins. The cofactor is heme b.

Its subcellular location is the mitochondrion inner membrane. Functionally, component of the ubiquinol-cytochrome c reductase complex (complex III or cytochrome b-c1 complex) that is part of the mitochondrial respiratory chain. The b-c1 complex mediates electron transfer from ubiquinol to cytochrome c. Contributes to the generation of a proton gradient across the mitochondrial membrane that is then used for ATP synthesis. In Channa asiatica (Small snakehead), this protein is Cytochrome b (mt-cyb).